The following is a 209-amino-acid chain: MSAPAIAIIDYDMGNLHSVSKALEVVGARPLISDRPAEIFAADAVVLPGVGAFDPAMARLQERELVPVIEQIIEQGMPFLGICLGLQVLFECSEEGTEPGLGIFAGKVKRFQSEPGLTIPHMGWNQLTLRPSASPLWQHLPPSPWVYFVHSYFVAPEDPSLVAATVCHGQQTVTAAIARNNLFACQFHPEKSGAVGLQLLRNFVALVKD.

One can recognise a Glutamine amidotransferase type-1 domain in the interval 5–209 (AIAIIDYDMG…LRNFVALVKD (205 aa)). Cys-83 acts as the Nucleophile in catalysis. Residues His-188 and Glu-190 contribute to the active site.

In terms of assembly, heterodimer of HisH and HisF.

It localises to the cytoplasm. It catalyses the reaction 5-[(5-phospho-1-deoxy-D-ribulos-1-ylimino)methylamino]-1-(5-phospho-beta-D-ribosyl)imidazole-4-carboxamide + L-glutamine = D-erythro-1-(imidazol-4-yl)glycerol 3-phosphate + 5-amino-1-(5-phospho-beta-D-ribosyl)imidazole-4-carboxamide + L-glutamate + H(+). The enzyme catalyses L-glutamine + H2O = L-glutamate + NH4(+). It participates in amino-acid biosynthesis; L-histidine biosynthesis; L-histidine from 5-phospho-alpha-D-ribose 1-diphosphate: step 5/9. Functionally, IGPS catalyzes the conversion of PRFAR and glutamine to IGP, AICAR and glutamate. The HisH subunit catalyzes the hydrolysis of glutamine to glutamate and ammonia as part of the synthesis of IGP and AICAR. The resulting ammonia molecule is channeled to the active site of HisF. The protein is Imidazole glycerol phosphate synthase subunit HisH of Thermosynechococcus vestitus (strain NIES-2133 / IAM M-273 / BP-1).